The following is a 435-amino-acid chain: MQISVESLSSVKKKINFEIPAARVASEVEKVYDEIRKHAAIKGFRKGKVPKDIIKKHYHEKMADDVLKNIVNDTYFKALTDEKIYPVSYPVIDSDELKVGENFKYSATVEVFPDVEVKDYDGLEVKKEKFVLNDEVVTGRLREMQENMAHLEPAEAGVAAKSGDYVTFDFKGSIDGVPFDGGAADDFQLELGSGRFIPGFEDQLVGMKSGDESEIKVTFPENYGQKDLAGKDASFTVKIKEIKVKELPELNDDFAKDFGEFETLEDLKKKIAEVHNLQENERIEADLRDRLIKALIEKNSFEVPETLVDKQLNLMLENSKRRLAMQRLTIEMMGLNDEGYKAQFRSAAETQVKGSILLDALARKESIEVTAAEVDEKLEQIAQQNNQDLEQVNKFYQQNAQAKENLSAQLKEDKAIELLLSKATVTEVERKELDK.

In terms of domain architecture, PPIase FKBP-type spans 163-248 (GDYVTFDFKG…IKEIKVKELP (86 aa)).

The protein belongs to the FKBP-type PPIase family. Tig subfamily.

The protein localises to the cytoplasm. It carries out the reaction [protein]-peptidylproline (omega=180) = [protein]-peptidylproline (omega=0). Its function is as follows. Involved in protein export. Acts as a chaperone by maintaining the newly synthesized protein in an open conformation. Functions as a peptidyl-prolyl cis-trans isomerase. The polypeptide is Trigger factor (Geotalea daltonii (strain DSM 22248 / JCM 15807 / FRC-32) (Geobacter daltonii)).